The following is a 281-amino-acid chain: Pantothenate synthetase (281 aa).

30 to 37 is an ATP binding site; that stretch reads MGYLHEGH. His37 acts as the Proton donor in catalysis. Gln61 lines the (R)-pantoate pocket. Gln61 is a beta-alanine binding site. 147 to 150 is a binding site for ATP; sequence GEKD. (R)-pantoate is bound at residue Gln153. Residues Ile176 and 184 to 187 each bind ATP; that span reads KSSR.

The protein belongs to the pantothenate synthetase family. Homodimer.

It localises to the cytoplasm. It catalyses the reaction (R)-pantoate + beta-alanine + ATP = (R)-pantothenate + AMP + diphosphate + H(+). It functions in the pathway cofactor biosynthesis; (R)-pantothenate biosynthesis; (R)-pantothenate from (R)-pantoate and beta-alanine: step 1/1. In terms of biological role, catalyzes the condensation of pantoate with beta-alanine in an ATP-dependent reaction via a pantoyl-adenylate intermediate. In Clostridium botulinum (strain Okra / Type B1), this protein is Pantothenate synthetase.